The primary structure comprises 285 residues: Bifunctional protein FolD (285 aa).

Residues 165 to 167 and Ser-190 contribute to the NADP(+) site; that span reads GRS.

Belongs to the tetrahydrofolate dehydrogenase/cyclohydrolase family. In terms of assembly, homodimer.

It carries out the reaction (6R)-5,10-methylene-5,6,7,8-tetrahydrofolate + NADP(+) = (6R)-5,10-methenyltetrahydrofolate + NADPH. It catalyses the reaction (6R)-5,10-methenyltetrahydrofolate + H2O = (6R)-10-formyltetrahydrofolate + H(+). The protein operates within one-carbon metabolism; tetrahydrofolate interconversion. In terms of biological role, catalyzes the oxidation of 5,10-methylenetetrahydrofolate to 5,10-methenyltetrahydrofolate and then the hydrolysis of 5,10-methenyltetrahydrofolate to 10-formyltetrahydrofolate. The sequence is that of Bifunctional protein FolD from Burkholderia orbicola (strain AU 1054).